The following is a 575-amino-acid chain: E3 ubiquitin-protein ligase kcmf-1 (575 aa).

A ZZ-type zinc finger spans residues 9–73 (HEGVSCDGCA…PMQLILSSVD (65 aa)). Residues cysteine 14, cysteine 17, cysteine 29, cysteine 32, cysteine 38, cysteine 41, histidine 59, and histidine 63 each coordinate Zn(2+). Disordered stretches follow at residues 277-306 (PIYPPTSDESGDETPQPAADSADESEDDND) and 530-575 (EADE…INID). Acidic residues-rich tracts occupy residues 297–306 (SADESEDDND) and 530–563 (EADEAITNSEDEEIVGGETSGDDEDEQEDDENDS).

It belongs to the KCMF1 family.

The protein localises to the cytoplasm. Its subcellular location is the late endosome. It localises to the lysosome. It carries out the reaction S-ubiquitinyl-[E2 ubiquitin-conjugating enzyme]-L-cysteine + [acceptor protein]-L-lysine = [E2 ubiquitin-conjugating enzyme]-L-cysteine + N(6)-ubiquitinyl-[acceptor protein]-L-lysine.. Its pathway is protein modification; protein ubiquitination. In terms of biological role, E3 ubiquitin-protein ligase which accepts ubiquitin from an E2 ubiquitin-conjugating enzyme and then transfers it to targeted substrates, promoting their degradation by the proteasome. In Caenorhabditis elegans, this protein is E3 ubiquitin-protein ligase kcmf-1.